A 188-amino-acid chain; its full sequence is MSSSSSSSSPVKSTGSPFIQSLKPRESLASMGSATQLVIKDIGEIHSRLLDHRPVIQGETRYFIKEFEEKRGLREMRVLENLRNSISETNEHALPKCTSVMQDQLASVLKKLETANHTIHRLQQRELENAKRSASKAGEEKMRAHWEPVMKEQEQKRQTVDEEHRKAVMRLKEQYVTMDKELSKQISF.

A disordered region spans residues Met-1–Pro-24. Residues Pro-10–Ile-19 show a composition bias toward polar residues. A coiled-coil region spans residues Met-101–Ser-183.

It belongs to the BLOC1S5 family. As to quaternary structure, component of the biogenesis of lysosome-related organelles complex 1 (BLOC-1).

In terms of biological role, component of the BLOC-1 complex, a complex that is required for normal biogenesis of lysosome-related organelles (LRO), such as platelet dense granules and melanosomes. Plays a role in intracellular vesicle trafficking. This is Biogenesis of lysosome-related organelles complex 1 subunit 5 (bloc1s5) from Xenopus laevis (African clawed frog).